The primary structure comprises 477 residues: Zinc finger C3HC-type protein 1-like (477 aa).

The segment at 95 to 149 (CAKYGWCNIECDMLKCSSCNAYLCASLQPILDFSKYKQRCVELQEALRKAHEKFC) adopts a C3HC-type zinc-finger fold. The disordered stretch occupies residues 287-392 (SLSAPGTPVS…SSSSDTSPRS (106 aa)). The segment covering 354–363 (SMGQGENTGL) has biased composition (polar residues). Residues 370-379 (SPHRRAKRPR) show a composition bias toward basic residues. The segment covering 382–392 (SSSSSDTSPRS) has biased composition (low complexity).

Post-translationally, phosphorylated. May also be weakly phosphorylated on Tyr residues.

It is found in the nucleus. It localises to the nucleus envelope. Its function is as follows. Required for proper positioning of a substantial amount of TPR at the nuclear basket (NB) through interaction with TPR. This Xenopus laevis (African clawed frog) protein is Zinc finger C3HC-type protein 1-like (zc3hc1).